The primary structure comprises 73 residues: Antimicrobial peptide TsAP-1 (73 aa).

The signal sequence occupies residues Met1 to Ala22. The residue at position 39 (Lys39) is a Lysine amide. Residues Glu45 to Tyr73 constitute a propeptide that is removed on maturation.

As to expression, expressed by the venom gland.

Its subcellular location is the secreted. Its function is as follows. Has a low antimicrobial activity against S.aureus, E.coli, and C.albicans (MICs 120-160 uM). Has a low hemolytic activity (4% at 160 uM). Also inhibits the growth of two cancer cell lines on a total of five (the squamous carcinoma cell line H157 (IC(50)=55.9 uM) and the lung adenocarcinoma cell line H838 (IC(50)=52.5 uM)). The protein is Antimicrobial peptide TsAP-1 of Tityus serrulatus (Brazilian scorpion).